The chain runs to 158 residues: 6,7-dimethyl-8-ribityllumazine synthase (158 aa).

5-amino-6-(D-ribitylamino)uracil is bound by residues phenylalanine 23, serine 61–glutamate 63, and alanine 85–isoleucine 87. Aspartate 90–threonine 91 contacts (2S)-2-hydroxy-3-oxobutyl phosphate. Catalysis depends on histidine 93, which acts as the Proton donor. Phenylalanine 118 provides a ligand contact to 5-amino-6-(D-ribitylamino)uracil. Arginine 132 contacts (2S)-2-hydroxy-3-oxobutyl phosphate.

This sequence belongs to the DMRL synthase family.

It catalyses the reaction (2S)-2-hydroxy-3-oxobutyl phosphate + 5-amino-6-(D-ribitylamino)uracil = 6,7-dimethyl-8-(1-D-ribityl)lumazine + phosphate + 2 H2O + H(+). The protein operates within cofactor biosynthesis; riboflavin biosynthesis; riboflavin from 2-hydroxy-3-oxobutyl phosphate and 5-amino-6-(D-ribitylamino)uracil: step 1/2. Functionally, catalyzes the formation of 6,7-dimethyl-8-ribityllumazine by condensation of 5-amino-6-(D-ribitylamino)uracil with 3,4-dihydroxy-2-butanone 4-phosphate. This is the penultimate step in the biosynthesis of riboflavin. In Prochlorococcus marinus (strain NATL2A), this protein is 6,7-dimethyl-8-ribityllumazine synthase.